A 149-amino-acid polypeptide reads, in one-letter code: Deoxyuridine 5'-triphosphate nucleotidohydrolase (149 aa).

Residues 68 to 70 (RSG), Asn-81, 85 to 87 (LID), and Met-95 contribute to the substrate site.

The protein belongs to the dUTPase family. It depends on Mg(2+) as a cofactor.

The catalysed reaction is dUTP + H2O = dUMP + diphosphate + H(+). It functions in the pathway pyrimidine metabolism; dUMP biosynthesis; dUMP from dCTP (dUTP route): step 2/2. Functionally, this enzyme is involved in nucleotide metabolism: it produces dUMP, the immediate precursor of thymidine nucleotides and it decreases the intracellular concentration of dUTP so that uracil cannot be incorporated into DNA. The protein is Deoxyuridine 5'-triphosphate nucleotidohydrolase of Albidiferax ferrireducens (strain ATCC BAA-621 / DSM 15236 / T118) (Rhodoferax ferrireducens).